The primary structure comprises 239 residues: Myogenic factor 6 (239 aa).

A disordered region spans residues 28-64 (HLDMSGVSPLYNGNDSPLSPGQDNVPSETGGESSGDE). A compositionally biased stretch (polar residues) spans 38–58 (YNGNDSPLSPGQDNVPSETGG). The bHLH domain occupies 96 to 147 (DRRKAATLRERRRLKKINEAFDALKRKTVANPNQRLPKVEILRSAISYIERL). A disordered region spans residues 155 to 189 (DEQERSQSGASDTRNDKEQNRPSGGDYRWKKASNT).

In terms of assembly, efficient DNA binding requires dimerization with another bHLH protein.

It localises to the nucleus. In terms of biological role, involved in muscle differentiation (myogenic factor). Induces fibroblasts to differentiate into myoblasts. Probable sequence specific DNA-binding protein. The polypeptide is Myogenic factor 6 (myf6) (Takifugu rubripes (Japanese pufferfish)).